We begin with the raw amino-acid sequence, 98 residues long: Co-chaperonin GroES (98 aa).

The protein belongs to the GroES chaperonin family. In terms of assembly, heptamer of 7 subunits arranged in a ring. Interacts with the chaperonin GroEL.

The protein localises to the cytoplasm. Functionally, together with the chaperonin GroEL, plays an essential role in assisting protein folding. The GroEL-GroES system forms a nano-cage that allows encapsulation of the non-native substrate proteins and provides a physical environment optimized to promote and accelerate protein folding. GroES binds to the apical surface of the GroEL ring, thereby capping the opening of the GroEL channel. The protein is Co-chaperonin GroES of Leifsonia xyli subsp. xyli (strain CTCB07).